Here is a 347-residue protein sequence, read N- to C-terminus: Probable dual-specificity RNA methyltransferase RlmN (347 aa).

Glu93 acts as the Proton acceptor in catalysis. A Radical SAM core domain is found at 99–333; it reads TEKRLTACLS…VSLRKSRGLD (235 aa). Cys106 and Cys338 are oxidised to a cystine. Positions 113, 117, and 120 each coordinate [4Fe-4S] cluster. S-adenosyl-L-methionine-binding positions include 160-161, Ser190, 219-221, and Asn295; these read GE and SLH. The active-site S-methylcysteine intermediate is Cys338.

The protein belongs to the radical SAM superfamily. RlmN family. The cofactor is [4Fe-4S] cluster.

The protein resides in the cytoplasm. It catalyses the reaction adenosine(2503) in 23S rRNA + 2 reduced [2Fe-2S]-[ferredoxin] + 2 S-adenosyl-L-methionine = 2-methyladenosine(2503) in 23S rRNA + 5'-deoxyadenosine + L-methionine + 2 oxidized [2Fe-2S]-[ferredoxin] + S-adenosyl-L-homocysteine. It carries out the reaction adenosine(37) in tRNA + 2 reduced [2Fe-2S]-[ferredoxin] + 2 S-adenosyl-L-methionine = 2-methyladenosine(37) in tRNA + 5'-deoxyadenosine + L-methionine + 2 oxidized [2Fe-2S]-[ferredoxin] + S-adenosyl-L-homocysteine. In terms of biological role, specifically methylates position 2 of adenine 2503 in 23S rRNA and position 2 of adenine 37 in tRNAs. The protein is Probable dual-specificity RNA methyltransferase RlmN of Prochlorococcus marinus (strain MIT 9301).